Reading from the N-terminus, the 300-residue chain is MHTMKKWLKISIEANPLMVEVVSDYLVGIHGAGVDLAADKDENPAGQIVAFIEQAELSTADAEKCATQISVFLAEMAAVFNVASPSLVWEFLEEEDWSKNWKEHFVPFTIVPGLIIAPTWENYEAQGDELVIEMDPGMAFGTGHHATTSLSLSYLQDVVTQRGAKTVLDVGCGTGILVMGAVLFGAERGLGIDNCPDAVAAASNNVVHNHLAEKIDIGITPLSELREEYDLVVANIIHDVLASMVLELYSRVKKEGHLILSGLLADQQVDSIIEIFAREGFVLLEKGIEGEWGAVLLQKR.

Residues T148, G171, D193, and N235 each coordinate S-adenosyl-L-methionine.

It belongs to the methyltransferase superfamily. PrmA family.

It is found in the cytoplasm. It carries out the reaction L-lysyl-[protein] + 3 S-adenosyl-L-methionine = N(6),N(6),N(6)-trimethyl-L-lysyl-[protein] + 3 S-adenosyl-L-homocysteine + 3 H(+). Functionally, methylates ribosomal protein L11. In Desulfotalea psychrophila (strain LSv54 / DSM 12343), this protein is Ribosomal protein L11 methyltransferase.